We begin with the raw amino-acid sequence, 165 residues long: 2-C-methyl-D-erythritol 2,4-cyclodiphosphate synthase (165 aa).

Residues D13 and H15 each coordinate a divalent metal cation. 4-CDP-2-C-methyl-D-erythritol 2-phosphate is bound by residues 13–15 and 39–40; these read DRH and HS. H47 is an a divalent metal cation binding site. 4-CDP-2-C-methyl-D-erythritol 2-phosphate contacts are provided by residues 61–63 and F141; that span reads DIG.

This sequence belongs to the IspF family. In terms of assembly, homotrimer. The cofactor is a divalent metal cation.

The enzyme catalyses 4-CDP-2-C-methyl-D-erythritol 2-phosphate = 2-C-methyl-D-erythritol 2,4-cyclic diphosphate + CMP. Its pathway is isoprenoid biosynthesis; isopentenyl diphosphate biosynthesis via DXP pathway; isopentenyl diphosphate from 1-deoxy-D-xylulose 5-phosphate: step 4/6. Its function is as follows. Involved in the biosynthesis of isopentenyl diphosphate (IPP) and dimethylallyl diphosphate (DMAPP), two major building blocks of isoprenoid compounds. Catalyzes the conversion of 4-diphosphocytidyl-2-C-methyl-D-erythritol 2-phosphate (CDP-ME2P) to 2-C-methyl-D-erythritol 2,4-cyclodiphosphate (ME-CPP) with a corresponding release of cytidine 5-monophosphate (CMP). The protein is 2-C-methyl-D-erythritol 2,4-cyclodiphosphate synthase of Thermotoga maritima (strain ATCC 43589 / DSM 3109 / JCM 10099 / NBRC 100826 / MSB8).